A 320-amino-acid polypeptide reads, in one-letter code: G-protein coupled receptor homolog FPV021 (320 aa).

The Extracellular segment spans residues 1-18 (MDTDYGTVHTQQSVKGNT). Residues 19 to 39 (LILLIYFISFIVGFPGNCTVI) traverse the membrane as a helical segment. Residues 40-52 (WFTGYRWKKSVTT) lie on the Cytoplasmic side of the membrane. Residues 53 to 73 (IWFLNLAIADTLFVIFIPFEI) form a helical membrane-spanning segment. At 74–91 (TYILMGHYWPFGLFVCRI) the chain is on the extracellular side. A disulfide bridge connects residues Cys89 and Cys167. A helical transmembrane segment spans residues 92–112 (GSLMFNTGMYASIFFLTFISI). Residues 113–133 (DRYCLAFRRDICNKYRYRINI) lie on the Cytoplasmic side of the membrane. The chain crosses the membrane as a helical span at residues 134–154 (MVMIIISWIISILLSTPYMYF). Residues 155–188 (KNTNEKYRNNRDCLEDYHSDNNTYLLRRVVFCIS) are Extracellular-facing. Residue Asn175 is glycosylated (N-linked (GlcNAc...) asparagine; by host). A helical transmembrane segment spans residues 189–209 (LVMRYLVPSVVMLFCYCLLLF). Residues 210 to 222 (KHSLFLSKGQTYT) lie on the Cytoplasmic side of the membrane. Residues 223–243 (IVIMITSFMVLWTPYNILYFI) traverse the membrane as a helical segment. Residues 244–260 (DVIGSHYYNADTIIDAA) lie on the Extracellular side of the membrane. Residues 261-281 (PISISLIFLSSSINPMIYMLV) form a helical membrane-spanning segment. At 282 to 320 (GRYVSFENYSMRESLKLILSEERDNQTNHENEIKMENIN) the chain is on the cytoplasmic side.

It belongs to the G-protein coupled receptor 1 family.

Its subcellular location is the host cell membrane. In Vertebrata (FPV), this protein is G-protein coupled receptor homolog FPV021.